Here is a 354-residue protein sequence, read N- to C-terminus: Probable L-ascorbate-6-phosphate lactonase UlaG (354 aa).

It belongs to the UlaG family. A divalent metal cation serves as cofactor.

It localises to the cytoplasm. The enzyme catalyses L-ascorbate 6-phosphate + H2O = 3-dehydro-L-gulonate 6-phosphate. It functions in the pathway cofactor degradation; L-ascorbate degradation; D-xylulose 5-phosphate from L-ascorbate: step 1/4. In terms of biological role, probably catalyzes the hydrolysis of L-ascorbate-6-P into 3-keto-L-gulonate-6-P. Is essential for L-ascorbate utilization under anaerobic conditions. This Escherichia coli O45:K1 (strain S88 / ExPEC) protein is Probable L-ascorbate-6-phosphate lactonase UlaG.